A 115-amino-acid chain; its full sequence is V-type proton ATPase subunit G (115 aa).

It belongs to the V-ATPase G subunit family. V-ATPase is a heteromultimeric enzyme composed of a peripheral catalytic V1 complex (components A to H) attached to an integral membrane V0 proton pore complex (components: a, c, c', c'', d, e, f and VOA1).

Its subcellular location is the vacuole membrane. In terms of biological role, subunit of the V1 complex of vacuolar(H+)-ATPase (V-ATPase), a multisubunit enzyme composed of a peripheral complex (V1) that hydrolyzes ATP and a membrane integral complex (V0) that translocates protons. V-ATPase is responsible for acidifying and maintaining the pH of intracellular compartments. The protein is V-type proton ATPase subunit G (vma-10) of Neurospora crassa (strain ATCC 24698 / 74-OR23-1A / CBS 708.71 / DSM 1257 / FGSC 987).